Reading from the N-terminus, the 456-residue chain is Argininosuccinate lyase (456 aa).

It belongs to the lyase 1 family. Argininosuccinate lyase subfamily.

It localises to the cytoplasm. It catalyses the reaction 2-(N(omega)-L-arginino)succinate = fumarate + L-arginine. Its pathway is amino-acid biosynthesis; L-arginine biosynthesis; L-arginine from L-ornithine and carbamoyl phosphate: step 3/3. This is Argininosuccinate lyase from Listeria monocytogenes serovar 1/2a (strain ATCC BAA-679 / EGD-e).